A 387-amino-acid chain; its full sequence is Cytochrome b (387 aa).

The chain crosses the membrane as a helical span at residues 32-52 (LGSLLGLCLVIQIASGVFLAM). The heme b site is built by H82 and H96. A run of 8 helical transmembrane segments spans residues 85–105 (GASF…YYGS), 116–136 (IGVV…CLVY), 151–171 (LSAI…GFSV), 179–199 (FFAL…MHLM), 225–245 (FIFK…LFVF), 289–309 (LGGV…PYTD), 324–344 (LAFY…QLHV), and 350–370 (QLGQ…VPVI). Residues H183 and H197 each contribute to the heme b site.

Belongs to the cytochrome b family. Component of the ubiquinol-cytochrome c oxidoreductase (cytochrome b-c1 complex, complex III, CIII), a multisubunit enzyme composed of 10 subunits. The complex is composed of 3 respiratory subunits cytochrome b (COB), cytochrome c1 (CYT1) and Rieske protein (RIP1), 2 core protein subunits COR1 and QCR2, and 5 low-molecular weight protein subunits QCR6, QCR7, QCR8, QCR9 and QCR10. The complex exists as an obligatory dimer and forms supercomplexes (SCs) in the inner mitochondrial membrane with a monomer or a dimer of cytochrome c oxidase (complex IV, CIV), resulting in 2 different assemblies (supercomplexes III(2)IV and III(2)IV(2)). Heme b serves as cofactor.

Its subcellular location is the mitochondrion inner membrane. In terms of biological role, component of the ubiquinol-cytochrome c oxidoreductase, a multisubunit transmembrane complex that is part of the mitochondrial electron transport chain which drives oxidative phosphorylation. The complex plays an important role in the uptake of multiple carbon sources present in different host niches. This Candida albicans (strain SC5314 / ATCC MYA-2876) (Yeast) protein is Cytochrome b.